The chain runs to 141 residues: Nucleoside diphosphate kinase (141 aa).

ATP contacts are provided by Lys11, Phe59, Arg87, Thr93, Arg104, and Asn114. His117 functions as the Pros-phosphohistidine intermediate in the catalytic mechanism.

This sequence belongs to the NDK family. In terms of assembly, homotetramer. Mg(2+) is required as a cofactor.

Its subcellular location is the cytoplasm. It catalyses the reaction a 2'-deoxyribonucleoside 5'-diphosphate + ATP = a 2'-deoxyribonucleoside 5'-triphosphate + ADP. It carries out the reaction a ribonucleoside 5'-diphosphate + ATP = a ribonucleoside 5'-triphosphate + ADP. In terms of biological role, major role in the synthesis of nucleoside triphosphates other than ATP. The ATP gamma phosphate is transferred to the NDP beta phosphate via a ping-pong mechanism, using a phosphorylated active-site intermediate. This Delftia acidovorans (strain DSM 14801 / SPH-1) protein is Nucleoside diphosphate kinase.